Here is a 290-residue protein sequence, read N- to C-terminus: L-fucono-1,5-lactonase (290 aa).

It belongs to the metallo-dependent hydrolases superfamily.

It carries out the reaction L-fucono-1,5-lactone + H2O = L-fuconate + H(+). It catalyses the reaction L-fucono-1,4-lactone + H2O = L-fuconate + H(+). The catalysed reaction is D-arabinono-1,4-lactone + H2O = D-arabinonate + H(+). The enzyme catalyses L-xylono-1,4-lactone + H2O = L-xylonate + H(+). It carries out the reaction L-galactono-1,4-lactone + H2O = L-galactonate + H(+). Its function is as follows. Catalyzes the hydrolysis of L-fucono-1,5-lactone to L-fuconate. Can also hydrolyze L-fucono-1,4-lactone, L-galactono-1,4-lactone D-arabinono-1,4-lactone and L-xylono-1,4-lactone. This is L-fucono-1,5-lactonase from Burkholderia ambifaria (strain ATCC BAA-244 / DSM 16087 / CCUG 44356 / LMG 19182 / AMMD) (Burkholderia cepacia (strain AMMD)).